Here is a 364-residue protein sequence, read N- to C-terminus: DNA replication and repair protein RecF (364 aa).

30 to 37 (GNNAQGKT) contributes to the ATP binding site.

This sequence belongs to the RecF family.

Its subcellular location is the cytoplasm. The RecF protein is involved in DNA metabolism; it is required for DNA replication and normal SOS inducibility. RecF binds preferentially to single-stranded, linear DNA. It also seems to bind ATP. In Clostridium botulinum (strain ATCC 19397 / Type A), this protein is DNA replication and repair protein RecF.